The sequence spans 97 residues: Protein 9b (97 aa).

Residues 8–97 (VPPALHLVDP…PDEFVVVTAK (90 aa)) form the 9b domain.

The protein belongs to the coronavirus group 2 protein 9b family. Homodimer.

It is found in the host cytoplasmic vesicle membrane. It localises to the host cytoplasm. This chain is Protein 9b, found in Rhinolophus sinicus (Chinese rufous horseshoe bat).